An 89-amino-acid polypeptide reads, in one-letter code: Small ribosomal subunit protein uS15 (89 aa).

This sequence belongs to the universal ribosomal protein uS15 family. In terms of assembly, part of the 30S ribosomal subunit. Forms a bridge to the 50S subunit in the 70S ribosome, contacting the 23S rRNA.

In terms of biological role, one of the primary rRNA binding proteins, it binds directly to 16S rRNA where it helps nucleate assembly of the platform of the 30S subunit by binding and bridging several RNA helices of the 16S rRNA. Functionally, forms an intersubunit bridge (bridge B4) with the 23S rRNA of the 50S subunit in the ribosome. The sequence is that of Small ribosomal subunit protein uS15 from Granulibacter bethesdensis (strain ATCC BAA-1260 / CGDNIH1).